Reading from the N-terminus, the 271-residue chain is Acetyl-coenzyme A carboxylase carboxyl transferase subunit alpha (271 aa).

The region spanning 1–247 (MSRELIRTAD…KKTILEALGE (247 aa)) is the CoA carboxyltransferase C-terminal domain.

Belongs to the AccA family. Acetyl-CoA carboxylase is a heterohexamer composed of biotin carboxyl carrier protein (AccB), biotin carboxylase (AccC) and two subunits each of ACCase subunit alpha (AccA) and ACCase subunit beta (AccD).

The protein localises to the cytoplasm. It catalyses the reaction N(6)-carboxybiotinyl-L-lysyl-[protein] + acetyl-CoA = N(6)-biotinyl-L-lysyl-[protein] + malonyl-CoA. It participates in lipid metabolism; malonyl-CoA biosynthesis; malonyl-CoA from acetyl-CoA: step 1/1. In terms of biological role, component of the acetyl coenzyme A carboxylase (ACC) complex. First, biotin carboxylase catalyzes the carboxylation of biotin on its carrier protein (BCCP) and then the CO(2) group is transferred by the carboxyltransferase to acetyl-CoA to form malonyl-CoA. This is Acetyl-coenzyme A carboxylase carboxyl transferase subunit alpha from Clostridium perfringens (strain 13 / Type A).